Here is a 514-residue protein sequence, read N- to C-terminus: H/ACA ribonucleoprotein complex subunit DKC1 (514 aa).

Residue Ala-2 is modified to N-acetylalanine. Positions 2 to 21 are nucleolar localization; sequence ADAEVIILPKKHKKKKERKS. Residue Lys-20 forms a Glycyl lysine isopeptide (Lys-Gly) (interchain with G-Cter in SUMO2) linkage. At Ser-21 the chain carries Phosphoserine. Glycyl lysine isopeptide (Lys-Gly) (interchain with G-Cter in SUMO2) cross-links involve residues Lys-39 and Lys-43. The Nucleophile role is filled by Asp-125. Residue Lys-191 forms a Glycyl lysine isopeptide (Lys-Gly) (interchain with G-Cter in SUMO2) linkage. A PUA domain is found at 296–371; it reads HKRLVMKDSA…IVAKIKRVIM (76 aa). Ser-387 is modified (phosphoserine). Residue Lys-394 forms a Glycyl lysine isopeptide (Lys-Gly) (interchain with G-Cter in SUMO2) linkage. Lys-413 is covalently cross-linked (Glycyl lysine isopeptide (Lys-Gly) (interchain with G-Cter in SUMO1); alternate). Lys-413 is covalently cross-linked (Glycyl lysine isopeptide (Lys-Gly) (interchain with G-Cter in SUMO2); alternate). Residues Lys-424 and Lys-433 each participate in a glycyl lysine isopeptide (Lys-Gly) (interchain with G-Cter in SUMO2) cross-link. The interval 443-514 is disordered; sequence KTAKRKRESE…KAKEVELVSE (72 aa). The tract at residues 446-514 is nuclear and nucleolar localization; it reads KRKRESESES…KAKEVELVSE (69 aa). 3 positions are modified to phosphoserine: Ser-451, Ser-453, and Ser-455. Thr-458 carries the phosphothreonine modification. Lys-467 is covalently cross-linked (Glycyl lysine isopeptide (Lys-Gly) (interchain with G-Cter in SUMO2)). Residues 468 to 480 are compositionally biased toward basic residues; the sequence is KEKKKSKKDKKAK. Phosphoserine occurs at positions 485, 494, and 513.

This sequence belongs to the pseudouridine synthase TruB family. Part of the H/ACA small nucleolar ribonucleoprotein (H/ACA snoRNP) complex, which contains NHP2/NOLA2, GAR1/NOLA1, NOP10/NOLA3, and DKC1/NOLA4, which is presumed to be the catalytic subunit. The complex contains a stable core formed by binding of one or two NOP10-DKC1 heterodimers to NHP2; GAR1 subsequently binds to this core via DKC1. The complex binds a box H/ACA small nucleolar RNA (snoRNA), which may target the specific site of modification within the RNA substrate. During assembly, the complex contains NAF1 instead of GAR1/NOLA1. The complex also interacts with TERC, which contains a 3'-terminal domain related to the box H/ACA snoRNAs. Specific interactions with snoRNAs or TERC are mediated by GAR1 and NHP2. Associates with NOLC1/NOPP140. H/ACA snoRNPs interact with the SMN complex, consisting of SMN1 or SMN2, GEMIN2/SIP1, DDX20/GEMIN3, and GEMIN4. This is mediated by interaction between GAR1 and SMN1 or SMN2. The SMN complex may be required for correct assembly of the H/ACA snoRNP complex. Component of the telomerase holoenzyme complex composed of one molecule of TERT, one molecule of WRAP53/TCAB1, two molecules of H/ACA ribonucleoprotein complex subunits DKC1, NOP10, NHP2 and GAR1, and a telomerase RNA template component (TERC). The telomerase holoenzyme complex is associated with TEP1, SMG6/EST1A and POT1. Interacts with SHQ1; this interaction may lead to the stabilization of DKC1, from the time of its synthesis until its association with NOP10, NHP2, and NAF1 at the nascent H/ACA RNA. Interacts with HMBOX1. Interacts with DHX36. Ubiquitously expressed.

Its subcellular location is the nucleus. It localises to the nucleolus. It is found in the cajal body. The protein resides in the cytoplasm. The enzyme catalyses uridine in 5S rRNA = pseudouridine in 5S rRNA. Its function is as follows. Catalytic subunit of H/ACA small nucleolar ribonucleoprotein (H/ACA snoRNP) complex, which catalyzes pseudouridylation of rRNA. This involves the isomerization of uridine such that the ribose is subsequently attached to C5, instead of the normal N1. Each rRNA can contain up to 100 pseudouridine ('psi') residues, which may serve to stabilize the conformation of rRNAs. Required for ribosome biogenesis and telomere maintenance. Also required for correct processing or intranuclear trafficking of TERC, the RNA component of the telomerase reverse transcriptase (TERT) holoenzyme. Functionally, promotes cell to cell and cell to substratum adhesion, increases the cell proliferation rate and leads to cytokeratin hyper-expression. This is H/ACA ribonucleoprotein complex subunit DKC1 from Homo sapiens (Human).